The following is a 396-amino-acid chain: Elongation factor Tu 2 (396 aa).

The region spanning 10 to 206 (KPHVNVGTIG…ALDTYIPTPE (197 aa)) is the tr-type G domain. The segment at 19–26 (GHVDHGKT) is G1. GTP is bound at residue 19-26 (GHVDHGKT). T26 lines the Mg(2+) pocket. A G2 region spans residues 60 to 64 (GITIN). The segment at 81 to 84 (DCPG) is G3. GTP contacts are provided by residues 81–85 (DCPGH) and 136–139 (NKAD). The interval 136 to 139 (NKAD) is G4. The segment at 174–176 (SAK) is G5.

It belongs to the TRAFAC class translation factor GTPase superfamily. Classic translation factor GTPase family. EF-Tu/EF-1A subfamily. As to quaternary structure, monomer.

Its subcellular location is the cytoplasm. The catalysed reaction is GTP + H2O = GDP + phosphate + H(+). Its function is as follows. GTP hydrolase that promotes the GTP-dependent binding of aminoacyl-tRNA to the A-site of ribosomes during protein biosynthesis. This chain is Elongation factor Tu 2, found in Methylobacillus flagellatus (strain ATCC 51484 / DSM 6875 / VKM B-1610 / KT).